A 230-amino-acid chain; its full sequence is Orotidine 5'-phosphate decarboxylase (230 aa).

Residues Asp-11, Lys-34, 61–70 (DLKLHDIPNT), Thr-117, Arg-179, Gln-188, Gly-208, and Arg-209 each bind substrate. Catalysis depends on Lys-63, which acts as the Proton donor.

This sequence belongs to the OMP decarboxylase family. Type 1 subfamily. Homodimer.

The enzyme catalyses orotidine 5'-phosphate + H(+) = UMP + CO2. It functions in the pathway pyrimidine metabolism; UMP biosynthesis via de novo pathway; UMP from orotate: step 2/2. Functionally, catalyzes the decarboxylation of orotidine 5'-monophosphate (OMP) to uridine 5'-monophosphate (UMP). The protein is Orotidine 5'-phosphate decarboxylase of Streptococcus equi subsp. zooepidemicus (strain MGCS10565).